We begin with the raw amino-acid sequence, 335 residues long: Glycerol-3-phosphate dehydrogenase [NAD(P)+] (335 aa).

Residue Lys-109 coordinates NADPH. Residues Lys-109, Gly-141, and Ser-143 each coordinate sn-glycerol 3-phosphate. Ala-145 serves as a coordination point for NADPH. Sn-glycerol 3-phosphate is bound by residues Lys-196, Asp-249, Ser-259, Arg-260, and Asn-261. The active-site Proton acceptor is the Lys-196. Arg-260 serves as a coordination point for NADPH. NADPH is bound at residue Glu-283.

It belongs to the NAD-dependent glycerol-3-phosphate dehydrogenase family.

It is found in the cytoplasm. It catalyses the reaction sn-glycerol 3-phosphate + NAD(+) = dihydroxyacetone phosphate + NADH + H(+). It carries out the reaction sn-glycerol 3-phosphate + NADP(+) = dihydroxyacetone phosphate + NADPH + H(+). It functions in the pathway membrane lipid metabolism; glycerophospholipid metabolism. In terms of biological role, catalyzes the reduction of the glycolytic intermediate dihydroxyacetone phosphate (DHAP) to sn-glycerol 3-phosphate (G3P), the key precursor for phospholipid synthesis. This Mycoplasma mobile (strain ATCC 43663 / 163K / NCTC 11711) (Mesomycoplasma mobile) protein is Glycerol-3-phosphate dehydrogenase [NAD(P)+].